The primary structure comprises 365 residues: 5-hydroxytryptamine receptor 1E (365 aa).

Over 1-22 (MNITNCTTDASMVVRPKTVTEK) the chain is Extracellular. N-linked (GlcNAc...) asparagine glycans are attached at residues asparagine 2 and asparagine 5. The helical transmembrane segment at 23 to 47 (MLICMTLVIITTLTMLLNSAVIMAI) threads the bilayer. The Cytoplasmic portion of the chain corresponds to 48–59 (CTTKKLHQPANY). A helical membrane pass occupies residues 60–82 (LICSLAVTDLLVAVLVMPLSIMY). Topologically, residues 83–96 (IVMDSWRLGYFICE) are extracellular. Cysteine 95 and cysteine 173 form a disulfide bridge. The helical transmembrane segment at 97–118 (VWLSVDMTCCTCSILHLCVIAL) threads the bilayer. Ergotamine-binding residues include aspartate 102 and threonine 107. Positions 119 to 121 (DRY) match the DRY motif; important for ligand-induced conformation changes motif. Residues 119–138 (DRYWAITNAIEYARKRTAKR) lie on the Cytoplasmic side of the membrane. A helical membrane pass occupies residues 139-160 (AGLMILTVWTISIFISMPPLFW). Over 161 to 179 (RSHRQLSPPPSQCTIQHDH) the chain is Extracellular. Ergotamine is bound at residue isoleucine 175. A helical membrane pass occupies residues 180–202 (VIYTIYSTFGAFYIPLTLILILY). At 203 to 291 (YRIYHAAKSL…SSTRERKAAR (89 aa)) the chain is on the cytoplasmic side. The chain crosses the membrane as a helical span at residues 292–314 (ILGLILGAFILSWLPFFIKELIV). Topologically, residues 315–324 (GLSIYTVSSE) are extracellular. A helical transmembrane segment spans residues 325–347 (VGDFLTWLGYVNSLINPLLYTSF). Residues 340–344 (NPLLY) carry the NPxxY motif; important for ligand-induced conformation changes and signaling motif. The Cytoplasmic segment spans residues 348–365 (NEDFKLAFKKLIRCREHT).

This sequence belongs to the G-protein coupled receptor 1 family. As to expression, detected in the brain with the greatest abundance in the hippocampus, followed by the olfactory bulb. Lower levels are detected in the cortex, thalamus, pons, hypothalamus, midbrain, striatum, and cerebellum.

The protein localises to the cell membrane. G-protein coupled receptor for 5-hydroxytryptamine (serotonin). Also functions as a receptor for various alkaloids and psychoactive substances. Ligand binding causes a conformation change that triggers signaling via guanine nucleotide-binding proteins (G proteins) and modulates the activity of down-stream effectors, such as adenylate cyclase. Signaling inhibits adenylate cyclase activity. This is 5-hydroxytryptamine receptor 1E (5HT1E) from Cavia porcellus (Guinea pig).